We begin with the raw amino-acid sequence, 856 residues long: Leucine--tRNA ligase (856 aa).

A 'HIGH' region motif is present at residues P53–H63. The 'KMSKS' region motif lies at K622–S626. An ATP-binding site is contributed by K625.

It belongs to the class-I aminoacyl-tRNA synthetase family.

Its subcellular location is the cytoplasm. It catalyses the reaction tRNA(Leu) + L-leucine + ATP = L-leucyl-tRNA(Leu) + AMP + diphosphate. This is Leucine--tRNA ligase from Prochlorococcus marinus (strain AS9601).